The sequence spans 543 residues: Chaperonin GroEL (543 aa).

ATP-binding positions include 29-32 (TLGP), 86-90 (DGTTT), G413, 478-480 (NAA), and D494.

This sequence belongs to the chaperonin (HSP60) family. In terms of assembly, forms a cylinder of 14 subunits composed of two heptameric rings stacked back-to-back. Interacts with the co-chaperonin GroES.

The protein localises to the cytoplasm. It catalyses the reaction ATP + H2O + a folded polypeptide = ADP + phosphate + an unfolded polypeptide.. Functionally, together with its co-chaperonin GroES, plays an essential role in assisting protein folding. The GroEL-GroES system forms a nano-cage that allows encapsulation of the non-native substrate proteins and provides a physical environment optimized to promote and accelerate protein folding. The protein is Chaperonin GroEL of Lactobacillus gasseri (strain ATCC 33323 / DSM 20243 / BCRC 14619 / CIP 102991 / JCM 1131 / KCTC 3163 / NCIMB 11718 / NCTC 13722 / AM63).